Reading from the N-terminus, the 360-residue chain is Teichoic acids export ATP-binding protein TagH (360 aa).

Residues 24 to 245 enclose the ABC transporter domain; that stretch reads LKAMFFPKTR…YEDYINWFNK (222 aa). 59–66 is a binding site for ATP; that stretch reads GINGSGKS. Residues 246 to 360 form a unknown region; the sequence is LSKEEKEAHK…GDIDNSDVSL (115 aa). The segment at 270–290 is disordered; sequence EEQENGKAGSGGDGTQPIVQP.

Belongs to the ABC transporter superfamily. Teichoic acids exporter (TC 3.A.1.104.1) family. In terms of assembly, the complex is composed of two ATP-binding proteins (TagH) and two transmembrane proteins (TagG).

The protein resides in the cell membrane. The enzyme catalyses ATP + H2O + teichoic acidSide 1 = ADP + phosphate + teichoic acidSide 2.. Its function is as follows. Part of the ABC transporter complex TagGH involved in teichoic acids export. Responsible for energy coupling to the transport system. This chain is Teichoic acids export ATP-binding protein TagH, found in Shouchella clausii (strain KSM-K16) (Alkalihalobacillus clausii).